Reading from the N-terminus, the 411-residue chain is Cytosolic Fe-S cluster assembly factor narfl (411 aa).

[4Fe-4S] cluster is bound by residues cysteine 11, cysteine 124, cysteine 180, cysteine 329, and cysteine 333.

This sequence belongs to the NARF family. In terms of assembly, component of the CIA complex.

Its function is as follows. Component of the cytosolic iron-sulfur protein assembly (CIA) complex, a multiprotein complex that mediates the incorporation of iron-sulfur cluster into extramitochondrial Fe/S proteins. The polypeptide is Cytosolic Fe-S cluster assembly factor narfl (narfl) (Danio rerio (Zebrafish)).